The sequence spans 194 residues: MTIKLIVGLANPGAEYAATRHNAGAWFVDLLAERLRAPLREEAKFFGYTSRVTLGGEDVRLLVPTTFMNLSGKAVAAMASFFRINPDEILVAHDELDLPPGVAKFKLAGAHGGHNGLKDIISKLGNNPNFHRLRIGIGHPGDKNKVVGFVLGKPPVSEQKLIDEAIDEAARCTEMWFTDGLTKATNRLHAFKAQ.

Position 16 (tyrosine 16) interacts with tRNA. The active-site Proton acceptor is the histidine 21. Residues phenylalanine 67, asparagine 69, and asparagine 115 each contribute to the tRNA site.

Belongs to the PTH family. As to quaternary structure, monomer.

The protein localises to the cytoplasm. The catalysed reaction is an N-acyl-L-alpha-aminoacyl-tRNA + H2O = an N-acyl-L-amino acid + a tRNA + H(+). Functionally, hydrolyzes ribosome-free peptidyl-tRNAs (with 1 or more amino acids incorporated), which drop off the ribosome during protein synthesis, or as a result of ribosome stalling. In terms of biological role, catalyzes the release of premature peptidyl moieties from peptidyl-tRNA molecules trapped in stalled 50S ribosomal subunits, and thus maintains levels of free tRNAs and 50S ribosomes. In Shigella boydii serotype 4 (strain Sb227), this protein is Peptidyl-tRNA hydrolase.